The following is a 189-amino-acid chain: Interleukin-23 subunit alpha (189 aa).

An N-terminal signal peptide occupies residues methionine 1–threonine 19.

It belongs to the IL-6 superfamily. In terms of assembly, heterodimer with IL12B; disulfide-linked. The heterodimer is known as interleukin IL-23. Interacts with IL23R; this interaction enables recruitment of IL12RB1.

It localises to the secreted. In terms of biological role, associates with IL12B to form the pro-inflammatory cytokine IL-23 that plays different roles in innate and adaptive immunity. Released by antigen-presenting cells such as dendritic cells or macrophages, binds to a heterodimeric receptor complex composed of IL12RB1 and IL23R to activate JAK2 and TYK2 which then phosphorylate the receptor to form a docking site leading to the phosphorylation of STAT3 and STAT4. This process leads to activation of several pathways including p38 MAPK or NF-kappa-B and promotes the production of pro-inflammatory cytokines such as interleukin-17A/IL17A. In turn, participates in the early and effective intracellular bacterial clearance. Promotes the expansion and survival of T-helper 17 cells, a CD4-positive helper T-cell subset that produces IL-17, as well as other IL-17-producing cells. This chain is Interleukin-23 subunit alpha (IL23A), found in Cavia porcellus (Guinea pig).